The chain runs to 462 residues: Glycine--tRNA ligase (462 aa).

Substrate contacts are provided by arginine 100 and glutamate 174. Residues 206 to 208, 216 to 221, 290 to 291, and 334 to 337 contribute to the ATP site; these read RNE, FRTREF, EL, and GADR. Substrate is bound at residue 221–225; sequence FEQME. Residue 330 to 334 participates in substrate binding; the sequence is EPSLG.

This sequence belongs to the class-II aminoacyl-tRNA synthetase family. As to quaternary structure, homodimer.

It is found in the cytoplasm. The enzyme catalyses tRNA(Gly) + glycine + ATP = glycyl-tRNA(Gly) + AMP + diphosphate. In terms of biological role, catalyzes the attachment of glycine to tRNA(Gly). This is Glycine--tRNA ligase from Acetivibrio thermocellus (strain ATCC 27405 / DSM 1237 / JCM 9322 / NBRC 103400 / NCIMB 10682 / NRRL B-4536 / VPI 7372) (Clostridium thermocellum).